A 152-amino-acid chain; its full sequence is MDSTAFVGAAAPLRVAAAARSTICMAAADDKPVVSRRAALTGAAAAALAAVAGSLPALAETEYANVPFLGGSVIIDINNANVRAYAKYPGMYPTVAGLIATNGPFETVSDLYKIPGLTDLQIATLKKYEDKLVALTPTPEYELDKVNNGLYR.

The N-terminal 35 residues, 1 to 35, are a transit peptide targeting the chloroplast; it reads MDSTAFVGAAAPLRVAAAARSTICMAAADDKPVVS. The transit peptide at 36–59 directs the protein to the thylakoid; it reads RRAALTGAAAAALAAVAGSLPALA.

The protein belongs to the PsbU family. In terms of assembly, PSII is composed of 1 copy each of membrane proteins PsbA, PsbB, PsbC, PsbD, PsbE, PsbF, PsbH, PsbI, PsbJ, PsbK, PsbL, PsbM, PsbT, PsbX, PsbY, PsbZ, Psb30/Ycf12, at least 3 peripheral proteins of the oxygen-evolving complex and a large number of cofactors. It forms dimeric complexes. The oxygen-evolving complex in red algae is composed of PsbO (OEC33), PsbQ', cytochrome c-550 and PsbU. In terms of processing, predicted to be translocated into the thylakoid lumen by the Tat system.

It localises to the plastid. Its subcellular location is the chloroplast thylakoid membrane. One of the extrinsic, lumenal subunits of photosystem II (PSII). PSII is a light-driven water plastoquinone oxidoreductase, using light energy to abstract electrons from H(2)O, generating a proton gradient subsequently used for ATP formation. The extrinsic proteins stabilize the structure of photosystem II oxygen-evolving complex (OEC), the ion environment of oxygen evolution and protect the OEC against heat-induced inactivation. In Pyropia yezoensis (Susabi-nori), this protein is Photosystem II extrinsic protein U, chloroplastic.